Here is a 450-residue protein sequence, read N- to C-terminus: Tubulin alpha-4 chain (450 aa).

Q11 contacts GTP. K40 is modified (N6-acetyllysine). Positions 71, 144, 145, 179, 206, and 228 each coordinate GTP. E71 contacts Mg(2+). E254 is an active-site residue. Residues 431-450 (DYEEVGAESGEGDEGDEEEY) form a disordered region.

This sequence belongs to the tubulin family. As to quaternary structure, dimer of alpha and beta chains. A typical microtubule is a hollow water-filled tube with an outer diameter of 25 nm and an inner diameter of 15 nM. Alpha-beta heterodimers associate head-to-tail to form protofilaments running lengthwise along the microtubule wall with the beta-tubulin subunit facing the microtubule plus end conferring a structural polarity. Microtubules usually have 13 protofilaments but different protofilament numbers can be found in some organisms and specialized cells. Mg(2+) serves as cofactor. In terms of processing, undergoes a tyrosination/detyrosination cycle, the cyclic removal and re-addition of a C-terminal tyrosine residue by the enzymes tubulin tyrosine carboxypeptidase (TTCP) and tubulin tyrosine ligase (TTL), respectively. Post-translationally, acetylation of alpha chains at Lys-40 stabilizes microtubules and affects affinity and processivity of microtubule motors. This modification has a role in multiple cellular functions, ranging from cell motility, cell cycle progression or cell differentiation to intracellular trafficking and signaling.

It localises to the cytoplasm. The protein resides in the cytoskeleton. The catalysed reaction is GTP + H2O = GDP + phosphate + H(+). Functionally, tubulin is the major constituent of microtubules, a cylinder consisting of laterally associated linear protofilaments composed of alpha- and beta-tubulin heterodimers. Microtubules grow by the addition of GTP-tubulin dimers to the microtubule end, where a stabilizing cap forms. Below the cap, tubulin dimers are in GDP-bound state, owing to GTPase activity of alpha-tubulin. This is Tubulin alpha-4 chain from Gossypium hirsutum (Upland cotton).